Here is a 202-residue protein sequence, read N- to C-terminus: Urease accessory protein UreE (202 aa).

Positions 138–202 (RGAYHSHGGH…HGHHHGHKHD (65 aa)) are disordered. Positions 147 to 193 (HSHDHGHAAHDHGHAAHDHGHNHDHDHGHAHGHDHQHDHNCDHDHDH) are enriched in basic and acidic residues.

Belongs to the UreE family.

Its subcellular location is the cytoplasm. Functionally, involved in urease metallocenter assembly. Binds nickel. Probably functions as a nickel donor during metallocenter assembly. In Rhizobium etli (strain CIAT 652), this protein is Urease accessory protein UreE.